The chain runs to 222 residues: Phosphoribosylformylglycinamidine synthase subunit PurQ (222 aa).

The Glutamine amidotransferase type-1 domain occupies 3 to 222 (AAVLVFPGSN…ASLAAALVAA (220 aa)). Catalysis depends on cysteine 86, which acts as the Nucleophile. Active-site residues include histidine 194 and glutamate 196.

Part of the FGAM synthase complex composed of 1 PurL, 1 PurQ and 2 PurS subunits.

It is found in the cytoplasm. The catalysed reaction is N(2)-formyl-N(1)-(5-phospho-beta-D-ribosyl)glycinamide + L-glutamine + ATP + H2O = 2-formamido-N(1)-(5-O-phospho-beta-D-ribosyl)acetamidine + L-glutamate + ADP + phosphate + H(+). It catalyses the reaction L-glutamine + H2O = L-glutamate + NH4(+). It functions in the pathway purine metabolism; IMP biosynthesis via de novo pathway; 5-amino-1-(5-phospho-D-ribosyl)imidazole from N(2)-formyl-N(1)-(5-phospho-D-ribosyl)glycinamide: step 1/2. Its function is as follows. Part of the phosphoribosylformylglycinamidine synthase complex involved in the purines biosynthetic pathway. Catalyzes the ATP-dependent conversion of formylglycinamide ribonucleotide (FGAR) and glutamine to yield formylglycinamidine ribonucleotide (FGAM) and glutamate. The FGAM synthase complex is composed of three subunits. PurQ produces an ammonia molecule by converting glutamine to glutamate. PurL transfers the ammonia molecule to FGAR to form FGAM in an ATP-dependent manner. PurS interacts with PurQ and PurL and is thought to assist in the transfer of the ammonia molecule from PurQ to PurL. The chain is Phosphoribosylformylglycinamidine synthase subunit PurQ from Jannaschia sp. (strain CCS1).